Reading from the N-terminus, the 495-residue chain is UDP-N-acetylmuramoyl-L-alanyl-D-glutamate--2,6-diaminopimelate ligase (495 aa).

UDP-N-acetyl-alpha-D-muramoyl-L-alanyl-D-glutamate contacts are provided by residues Leu-27, Ser-29, and 44-46 (HQA). 116 to 122 (GTNGKTT) lines the ATP pocket. Residues Asn-157, 158 to 159 (TT), Ser-185, Gln-191, and Arg-193 contribute to the UDP-N-acetyl-alpha-D-muramoyl-L-alanyl-D-glutamate site. Lys-225 carries the N6-carboxylysine modification. Residues Arg-390, 414-417 (DNPR), Gly-465, and Glu-469 each bind meso-2,6-diaminopimelate. Residues 414-417 (DNPR) carry the Meso-diaminopimelate recognition motif motif.

The protein belongs to the MurCDEF family. MurE subfamily. The cofactor is Mg(2+). In terms of processing, carboxylation is probably crucial for Mg(2+) binding and, consequently, for the gamma-phosphate positioning of ATP.

Its subcellular location is the cytoplasm. The enzyme catalyses UDP-N-acetyl-alpha-D-muramoyl-L-alanyl-D-glutamate + meso-2,6-diaminopimelate + ATP = UDP-N-acetyl-alpha-D-muramoyl-L-alanyl-gamma-D-glutamyl-meso-2,6-diaminopimelate + ADP + phosphate + H(+). Its pathway is cell wall biogenesis; peptidoglycan biosynthesis. Catalyzes the addition of meso-diaminopimelic acid to the nucleotide precursor UDP-N-acetylmuramoyl-L-alanyl-D-glutamate (UMAG) in the biosynthesis of bacterial cell-wall peptidoglycan. The sequence is that of UDP-N-acetylmuramoyl-L-alanyl-D-glutamate--2,6-diaminopimelate ligase from Salmonella paratyphi A (strain ATCC 9150 / SARB42).